Consider the following 598-residue polypeptide: Nuclear receptor subfamily 4 group A member 2 (598 aa).

The interval 1–22 is disordered; the sequence is MPCVQAQYGSSPQGASPASQSY. A compositionally biased stretch (low complexity) spans 8 to 22; sequence YGSSPQGASPASQSY. Positions 260–335 form a DNA-binding region, nuclear receptor; it reads EGLCAVCGDN…VGMVKEVVRT (76 aa). NR C4-type zinc fingers lie at residues 263-283 and 299-323; these read CAVCGDNAACQHYGVRTCEGC and CLANKNCPVDKRRRNRCQYCRFQKC. Positions 287–314 match the Bipartite nuclear localization signal (NLS1) motif; that stretch reads FKRTVQKNAKYVCLANKNCPVDKRRRNR. The segment at 337–361 is disordered; it reads SLKGRRGRLPSKPKSPQEPSPPSPP. The Nuclear localization signal (NLS1) signature appears at 338–350; it reads LKGRRGRLPSKPK. The segment covering 352–361 has biased composition (pro residues); sequence PQEPSPPSPP. The 236-residue stretch at 360–595 folds into the NR LBD domain; that stretch reads PPVSLISALV…AIIDKLFLDT (236 aa). Positions 443–452 match the nuclear export sequence (NES1) motif; it reads FLELFVLRLA. Residues 568-577 carry the nuclear export sequence (NES2) motif; sequence QGLQRIFYLK.

Belongs to the nuclear hormone receptor family. NR4 subfamily. In terms of assembly, interacts with SFPQ, NCOR2, SIN3A and HADC1. The interaction with NCOR2 increases in the absence of PITX3. Interacts with PER2. In terms of tissue distribution, expressed in a number of cell lines of T-cell, B-cell and fibroblast origin. Strong expression in brain tissue.

It is found in the cytoplasm. The protein localises to the nucleus. Functionally, transcriptional regulator which is important for the differentiation and maintenance of meso-diencephalic dopaminergic (mdDA) neurons during development. It is crucial for expression of a set of genes such as SLC6A3, SLC18A2, TH and DRD2 which are essential for development of mdDA neurons. This Homo sapiens (Human) protein is Nuclear receptor subfamily 4 group A member 2 (NR4A2).